The chain runs to 140 residues: Immunity protein RhsIC (140 aa).

In terms of biological role, putative immunity protein component of a toxin-immunity protein module, which may function as a cellular contact-dependent growth inhibition (CDI) system. Blocks the toxic effects of expression of the C-terminus (residues 1519-1658) of cognate toxin RhsC in E.coli. In Dickeya dadantii (strain 3937) (Erwinia chrysanthemi (strain 3937)), this protein is Immunity protein RhsIC (rhsIC).